Consider the following 130-residue polypeptide: Protachykinin-1 (130 aa).

Residues 1–19 (MKILVAVAVIFFISTQLSA) form the signal peptide. Residues 20–56 (EEIGANDDFNYWSDWSDSDQIKEEMPEPFEHLLQRIA) constitute a propeptide that is removed on maturation. A methionine amide mark is found at M68 and M107.

The protein belongs to the tachykinin family. The substance P form is cleaved at Pro-59 by the prolyl endopeptidase FAP (seprase) activity (in vitro). Substance P is also cleaved and degraded by Angiotensin-converting enzyme (ACE) and neprilysin (MME).

The protein localises to the secreted. In terms of biological role, tachykinins are active peptides which excite neurons, evoke behavioral responses, are potent vasodilators and secretagogues, and contract (directly or indirectly) many smooth muscles. In Bos taurus (Bovine), this protein is Protachykinin-1 (TAC1).